Consider the following 451-residue polypeptide: Cysteine desulfurase (451 aa).

A121, T122, Q229, S249, and H251 together coordinate pyridoxal 5'-phosphate. The residue at position 252 (K252) is an N6-(pyridoxal phosphate)lysine. T289 serves as a coordination point for pyridoxal 5'-phosphate. The active-site Cysteine persulfide intermediate is the C375. C375 contributes to the [2Fe-2S] cluster binding site. Position 375 (C375) interacts with Zn(2+). Position 375 is a cysteine persulfide (C375).

Belongs to the class-V pyridoxal-phosphate-dependent aminotransferase family. NifS/IscS subfamily. Homodimer. Component of the mitochondrial core iron-sulfur cluster (ISC) complex composed of NFS1, LYRM4, NDUFAB1, ISCU, FXN, and FDX2; this complex is a heterohexamer containing two copies of each monomer. Component of cyteine desulfurase complex composed of NFS1, LYRM4 and NDUFAB1; this complex contributes to the activation of cysteine desulfurase activity and NFS1 stabilization. Interacts (homodimer form) with ISCU (D-state); each monomer interacts with the C-terminal regions of each NFS1 monomer. Interacts with HSPA9. Interacts (via homodimer form) with FDX2. Interacts (via homodimer form) with FXN. Interacts with LYRM4. Component of a complex composed of FXN, NFS1, LYRM4 and ISCU. In terms of assembly, monomer. Homodimer. Oligomer. Interacts with ISCU. Component of the cysteine desulfurase complex composed of NFS1 and LYRM4; this complex contributes to the activation of cysteine desulfurase activity. Interacts with MOCS3. Pyridoxal 5'-phosphate serves as cofactor. N-gluconoylated. Post-translationally, cysteine persulfide intermediate is reduced by thiol-containing molecules like glutathione and L-cysteine. Persulfide reduction is a rate-limiting step of cysteine desulfurase catalytic cycle.

It is found in the mitochondrion. It localises to the cytoplasm. Its subcellular location is the nucleus. The protein resides in the cytoskeleton. The protein localises to the microtubule organizing center. It is found in the centrosome. The enzyme catalyses (sulfur carrier)-H + L-cysteine = (sulfur carrier)-SH + L-alanine. It carries out the reaction L-cysteinyl-[cysteine desulfurase] + L-cysteine = S-sulfanyl-L-cysteinyl-[cysteine desulfurase] + L-alanine. Its activity is regulated as follows. Active only in complex with LYRM4. Its function is as follows. Cysteine desulfurase, of the core iron-sulfur cluster (ISC) assembly complex, that catalyzes the desulfuration of L-cysteine to L-alanine, as component of the cysteine desulfurase complex leading to the formation of a cysteine persulfide intermediate at the active site cysteine residue and participates in the [2Fe-2S] clusters assembly on the scaffolding protein ISCU. The persulfide is then transferred on the flexible Cys loop from the catalytic site of NFS1 to the surface of NFS1. After the NFS1-linked persulfide sulfur is transferred to one of the conserved Cys residues of the scaffold, a reaction assisted by FXN. The core iron-sulfur cluster (ISC) assembly complex is involved in the de novo synthesis of a [2Fe-2S] cluster, the first step of the mitochondrial iron-sulfur protein biogenesis. This process is initiated by the cysteine desulfurase complex (NFS1:LYRM4:NDUFAB1) that produces persulfide which is delivered on the scaffold protein ISCU in a FXN-dependent manner. Then this complex is stabilized by FDX2 which provides reducing equivalents to accomplish the [2Fe-2S] cluster assembly. Finally, the [2Fe-2S] cluster is transferred from ISCU to chaperone proteins, including HSCB, HSPA9 and GLRX5. In terms of biological role, may catalyze the desulfuration of L-cysteine to L-alanine as component of the cysteine desulfurase complex (NFS1:LYRM4), leading to the formation of a cysteine persulfide intermediate. Acts as a sulfur donor for MOCS3 by transferring the sulfur of the cysteine persulfide intermediate on MOCS3. The sequence is that of Cysteine desulfurase from Rattus norvegicus (Rat).